Consider the following 435-residue polypeptide: Homoserine dehydrogenase (435 aa).

T13, V14, and K104 together coordinate NADPH. An NAD(+)-binding site is contributed by V14. Positions 14 and 104 each coordinate NADP(+). The Na(+) site is built by E128, V131, G133, and I135. G186 and E189 together coordinate NADP(+). 2 residues coordinate L-homoserine: E189 and D200. The active-site Proton donor is the K204. Residue G301 coordinates NADPH. G301 contributes to the NAD(+) binding site. Position 301 (G301) interacts with NADP(+). Residues 354-429 (YLRVQAKDEP…CVEKPITMIR (76 aa)) enclose the ACT domain.

It belongs to the homoserine dehydrogenase family. In terms of assembly, homotetramer. A metal cation serves as cofactor.

It catalyses the reaction L-homoserine + NAD(+) = L-aspartate 4-semialdehyde + NADH + H(+). Its pathway is amino-acid biosynthesis; L-methionine biosynthesis via de novo pathway; L-homoserine from L-aspartate: step 3/3. It functions in the pathway amino-acid biosynthesis; L-threonine biosynthesis; L-threonine from L-aspartate: step 3/5. Neither NaCl nor KCl increase the activity. L-threonine and L-serine do not markedly inhibit the oxidation activity. Functionally, catalyzes the conversion of L-aspartate-beta-semialdehyde (L-Asa) to L-homoserine (L-Hse), the third step in the biosynthesis of threonine and methionine from aspartate. Is highly specific for NAD(+), and displays an approximate 479-fold (kcat/Km) preference for NAD(+) over NADP(+). In Neisseria gonorrhoeae (strain ATCC 700825 / FA 1090), this protein is Homoserine dehydrogenase.